We begin with the raw amino-acid sequence, 157 residues long: Phosphopantetheine adenylyltransferase (157 aa).

Serine 8 contacts substrate. ATP is bound by residues 8-9 (SF) and histidine 16. Residues lysine 40, threonine 72, and arginine 86 each coordinate substrate. ATP contacts are provided by residues 87–89 (GLR), glutamate 97, and 122–128 (HSFLSSS).

The protein belongs to the bacterial CoaD family. As to quaternary structure, homohexamer. Mg(2+) is required as a cofactor.

Its subcellular location is the cytoplasm. The enzyme catalyses (R)-4'-phosphopantetheine + ATP + H(+) = 3'-dephospho-CoA + diphosphate. The protein operates within cofactor biosynthesis; coenzyme A biosynthesis; CoA from (R)-pantothenate: step 4/5. In terms of biological role, reversibly transfers an adenylyl group from ATP to 4'-phosphopantetheine, yielding dephospho-CoA (dPCoA) and pyrophosphate. The chain is Phosphopantetheine adenylyltransferase from Prochlorococcus marinus (strain MIT 9303).